Consider the following 386-residue polypeptide: GTPase Obg (386 aa).

Residues 4–162 (SNFVDYVKIY…RTVILQLKLL (159 aa)) enclose the Obg domain. The interval 18-44 (KGGRGSSHFRREKYIPKGGPDGGDGGR) is disordered. Residues 163-329 (ADVGLVGFPN…LKDLLWKELN (167 aa)) form the OBG-type G domain. GTP contacts are provided by residues 169–176 (GFPNAGKS), 194–198 (FTTLE), 216–219 (DIPG), 283–286 (TKSD), and 310–312 (SSI). Ser176 and Thr196 together coordinate Mg(2+). Residues 357–386 (YIFPVDEDEDDPDEEYEEYWDDDEDEDTRK) are disordered.

Belongs to the TRAFAC class OBG-HflX-like GTPase superfamily. OBG GTPase family. Monomer. Requires Mg(2+) as cofactor.

It localises to the cytoplasm. Functionally, an essential GTPase which binds GTP, GDP and possibly (p)ppGpp with moderate affinity, with high nucleotide exchange rates and a fairly low GTP hydrolysis rate. Plays a role in control of the cell cycle, stress response, ribosome biogenesis and in those bacteria that undergo differentiation, in morphogenesis control. In Parabacteroides distasonis (strain ATCC 8503 / DSM 20701 / CIP 104284 / JCM 5825 / NCTC 11152), this protein is GTPase Obg.